Here is a 467-residue protein sequence, read N- to C-terminus: MQRWVLHIDMDAFFASCEQLTRPTLRGRPVLVGGVSGRGVVAGASYEARKFGARSAMPMHQAKARVGFGAVVVTPRHIVYSAASRRVFQIVEKRAGIVERLSIDEGFMEPEALVGATPEEVKQWAEELRAEIKEVTGLPSSVGAGSGKQIAKIGSGEAKPDGVFVVPVDKQHDLLDPLPVGALWGVGPVTGSKLASMGVETIGDLAALTQKEVEISLGATIGISLWNLARGIDDRPVEPRAEAKQISQEHTYEKDLLTRQQVDAAIIRSAEGAHRRLLKDGRGARTVSVKLRMADFRIESRSYTLSYATDDYATLEATAFRLARYPGEVGPIRLVGVSFSGLEESRQDILFPELDQQIIVPPAPDTDYEVGVQSSSSSESTQVEAPQDVALSMWCATQDVYHPEYGHGWVQGAGHGVVSVRFETRSTTKGRTKSFSMDDPDLTPADPLDSLDWADWFAENGETGDDE.

Positions 5-187 (VLHIDMDAFF…LPVGALWGVG (183 aa)) constitute a UmuC domain. Positions 9 and 104 each coordinate Mg(2+). The active site involves glutamate 105. Disordered stretches follow at residues 364–383 (PDTDYEVGVQSSSSSESTQV) and 429–449 (KGRTKSFSMDDPDLTPADPLD).

This sequence belongs to the DNA polymerase type-Y family. In terms of assembly, monomer. Mg(2+) serves as cofactor.

The protein resides in the cytoplasm. It carries out the reaction DNA(n) + a 2'-deoxyribonucleoside 5'-triphosphate = DNA(n+1) + diphosphate. Functionally, poorly processive, error-prone DNA polymerase involved in untargeted mutagenesis. Copies undamaged DNA at stalled replication forks, which arise in vivo from mismatched or misaligned primer ends. These misaligned primers can be extended by PolIV. Exhibits no 3'-5' exonuclease (proofreading) activity. May be involved in translesional synthesis, in conjunction with the beta clamp from PolIII. In Corynebacterium glutamicum (strain ATCC 13032 / DSM 20300 / JCM 1318 / BCRC 11384 / CCUG 27702 / LMG 3730 / NBRC 12168 / NCIMB 10025 / NRRL B-2784 / 534), this protein is DNA polymerase IV.